The primary structure comprises 90 residues: Putative defensin-like protein 243 (90 aa).

Residues 1–19 (MKVEVIFLASCVLFSLIHA) form the signal peptide. Cystine bridges form between Cys33–Cys88, Cys43–Cys72, Cys53–Cys82, and Cys70–Cys84.

The protein belongs to the DEFL family.

It localises to the secreted. In Arabidopsis thaliana (Mouse-ear cress), this protein is Putative defensin-like protein 243 (SCRL9).